We begin with the raw amino-acid sequence, 432 residues long: Putative D-alanyl-D-alanine carboxypeptidase (432 aa).

A helical; Signal-anchor membrane pass occupies residues 7-25 (ATVLLTFSLSAFAVEYPVL).

The protein belongs to the peptidase S12 family. YfeW subfamily.

It localises to the cell inner membrane. The catalysed reaction is Preferential cleavage: (Ac)2-L-Lys-D-Ala-|-D-Ala. Also transpeptidation of peptidyl-alanyl moieties that are N-acyl substituents of D-alanine.. In Salmonella paratyphi A (strain ATCC 9150 / SARB42), this protein is Putative D-alanyl-D-alanine carboxypeptidase.